The sequence spans 302 residues: Quinolinate synthase (302 aa).

Positions 24 and 41 each coordinate iminosuccinate. A [4Fe-4S] cluster-binding site is contributed by C86. Iminosuccinate is bound by residues Y112–N114 and S129. C171 serves as a coordination point for [4Fe-4S] cluster. Iminosuccinate contacts are provided by residues H197–E199 and T214. A [4Fe-4S] cluster-binding site is contributed by C259.

This sequence belongs to the quinolinate synthase family. Type 2 subfamily. [4Fe-4S] cluster is required as a cofactor.

It is found in the cytoplasm. The catalysed reaction is iminosuccinate + dihydroxyacetone phosphate = quinolinate + phosphate + 2 H2O + H(+). The protein operates within cofactor biosynthesis; NAD(+) biosynthesis; quinolinate from iminoaspartate: step 1/1. Catalyzes the condensation of iminoaspartate with dihydroxyacetone phosphate to form quinolinate. The polypeptide is Quinolinate synthase (Dehalococcoides mccartyi (strain CBDB1)).